Here is a 483-residue protein sequence, read N- to C-terminus: MIQVLLVTVCLAVFPYQGSSIILESGNVNDYEVVYPRKVTALPKRAVQQKYEDAMQYEFKVNGEPVVLHLEKNKGLFSEDYSETHYSPDGREITTYPSVEDHCYYHGRIHNDADSTASISACDGLKGYFKLQGETYLIEPLKLPDSEAHAVYKYENIEKEDEAPKMCGVTQNWESDESIKKASQLYLTPEQQRFPQRYVKLAIVVDYGMYTKYNRDSDKITVRVHEMVNHITEMYRPLNIDITLSLLDVWSEKDLITVQSDSDVTLEVFGDWRESVLLKRRSHDCAHLLTDTKLNDNTIGVAYKKGMCDPKLSVGLVQDYSKNVFMVAVTMTHEIGHNLGMEHDEDKNGKKCKCDTCIMSPVISDKQSKLFSDCSKNDYQTFLTNYKPQCILNAPLRTDTVSTPVSGNELLEEGEDCYCHIPPNPCCDPATCKLTPGSQCAEGLCCDQCRFKKKGTICRFARGDYPDDRCTGLSDDCPRWNDL.

The first 20 residues, Met1 to Ser20, serve as a signal peptide directing secretion. The propeptide occupies Ile21–Glu190. The region spanning Arg197–Pro395 is the Peptidase M12B domain. 3 disulfides stabilise this stretch: Cys308-Cys390, Cys352-Cys374, and Cys354-Cys357. Zn(2+) is bound at residue His333. Glu334 is an active-site residue. 2 residues coordinate Zn(2+): His337 and His343. The propeptide occupies Leu396–Leu411. The region spanning Thr403–Leu483 is the Disintegrin domain. Cystine bridges form between Cys417–Cys432, Cys419–Cys427, Cys426–Cys449, Cys440–Cys446, Cys445–Cys470, and Cys458–Cys477. Residues Arg462–Asp464 carry the Cell attachment site motif.

This sequence belongs to the venom metalloproteinase (M12B) family. P-II subfamily. P-IIa sub-subfamily. As to quaternary structure, monomer. The cofactor is Zn(2+). As to expression, expressed by the venom gland.

The protein localises to the secreted. Impairs hemostasis in the envenomed animal. Its function is as follows. Inhibits ADP- and collagen-induced human platelet aggregation with IC(50) of 123 and 135 nM, respectively. Inhibits sperm-egg binding in a concentration-dependent manner, but has no effect on the fusion of sperm-egg. The protein is Zinc metalloproteinase/disintegrin of Protobothrops jerdonii (Jerdon's pitviper).